Consider the following 105-residue polypeptide: Guanidinium exporter (105 aa).

The helical transmembrane segment at 1-21 (MSWIILVIAGLLEVVWAVGLK) threads the bilayer. Residues 22 to 28 (YTHGFSR) are Cytoplasmic-facing. The chain crosses the membrane as a helical span at residues 29–49 (LTPSVITVTAMIVSLALLAWA). The Periplasmic portion of the chain corresponds to 50–57 (MKSLPVGT). Residues 58–78 (AYAVWTGIGAVGAAITGIVLL) traverse the membrane as a helical segment. The Cytoplasmic segment spans residues 79 to 81 (GES). A helical transmembrane segment spans residues 82–102 (ANPMRLASLALIVLGIIGLKL). Over 103-105 (STH) the chain is Periplasmic.

It belongs to the drug/metabolite transporter (DMT) superfamily. Small multidrug resistance (SMR) (TC 2.A.7.1) family. Gdx/SugE subfamily.

Its subcellular location is the cell inner membrane. Guanidinium ion exporter. Couples guanidinium export to the proton motive force, exchanging one guanidinium ion for two protons. The protein is Guanidinium exporter of Escherichia coli O6:H1 (strain CFT073 / ATCC 700928 / UPEC).